The following is a 186-amino-acid chain: Cytochrome c oxidase subunit 4, mitochondrial (186 aa).

The transit peptide at 1–31 (MLLSRTAVAVARRATAAPALRRSIATTVVRC) directs the protein to the mitochondrion. Zn(2+) contacts are provided by C118, H126, C142, and C145.

This sequence belongs to the cytochrome c oxidase subunit 5B family. As to quaternary structure, component of the cytochrome c oxidase (complex IV, CIV), a multisubunit enzyme composed of 11 subunits. The complex is composed of a catalytic core of 3 subunits Cox1, Cox2 and Cox3, encoded in the mitochondrial DNA, and 8 supernumerary subunits Cox4, Cox5a/Cox5, Cox6, Cox7, Cox8, Cox7a/Cox9, Cox6b/Cox12 and Cox6a/Cox13, which are encoded in the nuclear genome. The complex exists as a monomer or a dimer and forms respiratory supercomplexes (SCs) in the inner mitochondrial membrane with NADH-ubiquinone oxidoreductase (complex I, CI) and ubiquinol-cytochrome c oxidoreductase (cytochrome b-c1 complex, complex III, CIII), resulting in various different assemblies (supercomplexes I(1)IV(1), I(1)III(3)IV(2), III(2)IV(1) and III(2)IV(2) as well as larger supercomplexes of compositions like I(1)III(2)IV(5-6)).

Its subcellular location is the mitochondrion inner membrane. It participates in energy metabolism; oxidative phosphorylation. Its function is as follows. Component of the cytochrome c oxidase, the last enzyme in the mitochondrial electron transport chain which drives oxidative phosphorylation. The respiratory chain contains 3 multisubunit complexes succinate dehydrogenase (complex II, CII), ubiquinol-cytochrome c oxidoreductase (cytochrome b-c1 complex, complex III, CIII) and cytochrome c oxidase (complex IV, CIV), that cooperate to transfer electrons derived from NADH and succinate to molecular oxygen, creating an electrochemical gradient over the inner membrane that drives transmembrane transport and the ATP synthase. Cytochrome c oxidase is the component of the respiratory chain that catalyzes the reduction of oxygen to water. Electrons originating from reduced cytochrome c in the intermembrane space (IMS) are transferred via the dinuclear copper A center (CU(A)) of Cox2 and heme A of Cox1 to the active site in Cox1, a binuclear center (BNC) formed by heme A3 and copper B (CU(B)). The BNC reduces molecular oxygen to 2 water molecules using 4 electrons from cytochrome c in the IMS and 4 protons from the mitochondrial matrix. The chain is Cytochrome c oxidase subunit 4, mitochondrial (cox-4) from Neurospora crassa (strain ATCC 24698 / 74-OR23-1A / CBS 708.71 / DSM 1257 / FGSC 987).